Consider the following 200-residue polypeptide: Imidazoleglycerol-phosphate dehydratase (200 aa).

This sequence belongs to the imidazoleglycerol-phosphate dehydratase family.

The protein resides in the cytoplasm. The catalysed reaction is D-erythro-1-(imidazol-4-yl)glycerol 3-phosphate = 3-(imidazol-4-yl)-2-oxopropyl phosphate + H2O. The protein operates within amino-acid biosynthesis; L-histidine biosynthesis; L-histidine from 5-phospho-alpha-D-ribose 1-diphosphate: step 6/9. The polypeptide is Imidazoleglycerol-phosphate dehydratase (Chlorobium phaeovibrioides (strain DSM 265 / 1930) (Prosthecochloris vibrioformis (strain DSM 265))).